The chain runs to 356 residues: UDP-3-O-acylglucosamine N-acyltransferase (356 aa).

Residue His242 is the Proton acceptor of the active site.

Belongs to the transferase hexapeptide repeat family. LpxD subfamily. In terms of assembly, homotrimer.

The catalysed reaction is a UDP-3-O-[(3R)-3-hydroxyacyl]-alpha-D-glucosamine + a (3R)-hydroxyacyl-[ACP] = a UDP-2-N,3-O-bis[(3R)-3-hydroxyacyl]-alpha-D-glucosamine + holo-[ACP] + H(+). The protein operates within bacterial outer membrane biogenesis; LPS lipid A biosynthesis. In terms of biological role, catalyzes the N-acylation of UDP-3-O-acylglucosamine using 3-hydroxyacyl-ACP as the acyl donor. Is involved in the biosynthesis of lipid A, a phosphorylated glycolipid that anchors the lipopolysaccharide to the outer membrane of the cell. In Acinetobacter baumannii (strain AB307-0294), this protein is UDP-3-O-acylglucosamine N-acyltransferase.